We begin with the raw amino-acid sequence, 774 residues long: Ion-translocating oxidoreductase complex subunit C (774 aa).

4Fe-4S ferredoxin-type domains lie at 369–397 and 407–436; these read GEPQ…QQLY and KATT…VQYF. [4Fe-4S] cluster contacts are provided by C377, C380, C383, C387, C416, C419, C422, and C426. Residues 602–750 form a disordered region; it reads KLEQQQANAE…EPEEQIDPRK (149 aa).

This sequence belongs to the 4Fe4S bacterial-type ferredoxin family. RnfC subfamily. The complex is composed of six subunits: RsxA, RsxB, RsxC, RsxD, RsxE and RsxG. Requires [4Fe-4S] cluster as cofactor.

The protein resides in the cell inner membrane. Functionally, part of a membrane-bound complex that couples electron transfer with translocation of ions across the membrane. Required to maintain the reduced state of SoxR. The polypeptide is Ion-translocating oxidoreductase complex subunit C (Escherichia coli O6:K15:H31 (strain 536 / UPEC)).